Consider the following 263-residue polypeptide: MNNLERLRQENPLVVCYTNDVVKNFTANGLLSIGASPAMSEAPEEAKEFYKVAGALLINIGTMTKANEQDILEIGKIANQQGTPIVFDPVAVGASSYRKAFCQKFLSEVKVSVIKGNASEILTLVDATTTMKGTDGKTDLDVVEIAKRAHEELNTAIVLTGKDDVVVQGGKVVKLSNGSPLLAKITGAGCLLGGIVASFLFREENPTLQVLEEAVSIYNIAAEIAEKDQQVNGPGTFLPKLLDQMYNIDFNTYQQQVKRQEVE.

Position 39 (Met-39) interacts with substrate. 2 residues coordinate ATP: Lys-115 and Thr-160. A substrate-binding site is contributed by Gly-187.

It belongs to the Thz kinase family. Requires Mg(2+) as cofactor.

The catalysed reaction is 5-(2-hydroxyethyl)-4-methylthiazole + ATP = 4-methyl-5-(2-phosphooxyethyl)-thiazole + ADP + H(+). The protein operates within cofactor biosynthesis; thiamine diphosphate biosynthesis; 4-methyl-5-(2-phosphoethyl)-thiazole from 5-(2-hydroxyethyl)-4-methylthiazole: step 1/1. In terms of biological role, catalyzes the phosphorylation of the hydroxyl group of 4-methyl-5-beta-hydroxyethylthiazole (THZ). The chain is Hydroxyethylthiazole kinase from Staphylococcus haemolyticus (strain JCSC1435).